The chain runs to 400 residues: Diphosphomevalonate decarboxylase (400 aa).

(R)-5-diphosphomevalonate contacts are provided by residues 25-28 (YWGK), Arg80, 155-160 (SGSACR), and Thr211.

This sequence belongs to the diphosphomevalonate decarboxylase family. Homodimer.

Its subcellular location is the cytoplasm. It carries out the reaction (R)-5-diphosphomevalonate + ATP = isopentenyl diphosphate + ADP + phosphate + CO2. Its pathway is steroid biosynthesis; cholesterol biosynthesis. Its function is as follows. Catalyzes the ATP dependent decarboxylation of (R)-5-diphosphomevalonate to form isopentenyl diphosphate (IPP). Functions in the mevalonate (MVA) pathway leading to isopentenyl diphosphate (IPP), a key precursor for the biosynthesis of isoprenoids and sterol synthesis. The sequence is that of Diphosphomevalonate decarboxylase (mvd) from Danio rerio (Zebrafish).